We begin with the raw amino-acid sequence, 339 residues long: D-erythrose-4-phosphate dehydrogenase (339 aa).

11–12 lines the NAD(+) pocket; the sequence is RI. Residues 153 to 155, arginine 199, 212 to 213, and arginine 235 each bind substrate; these read SCT and TK. Cysteine 154 (nucleophile) is an active-site residue. An NAD(+)-binding site is contributed by asparagine 317.

The protein belongs to the glyceraldehyde-3-phosphate dehydrogenase family. Epd subfamily. Homotetramer.

It is found in the cytoplasm. The catalysed reaction is D-erythrose 4-phosphate + NAD(+) + H2O = 4-phospho-D-erythronate + NADH + 2 H(+). It functions in the pathway cofactor biosynthesis; pyridoxine 5'-phosphate biosynthesis; pyridoxine 5'-phosphate from D-erythrose 4-phosphate: step 1/5. Catalyzes the NAD-dependent conversion of D-erythrose 4-phosphate to 4-phosphoerythronate. This is D-erythrose-4-phosphate dehydrogenase from Shewanella halifaxensis (strain HAW-EB4).